The sequence spans 255 residues: Triosephosphate isomerase (255 aa).

10–12 (NWK) is a substrate binding site. His96 serves as the catalytic Electrophile. Residue Glu168 is the Proton acceptor of the active site. Substrate-binding positions include Gly174, Ser213, and 234–235 (GG).

The protein belongs to the triosephosphate isomerase family. In terms of assembly, homodimer.

It localises to the cytoplasm. The catalysed reaction is D-glyceraldehyde 3-phosphate = dihydroxyacetone phosphate. The protein operates within carbohydrate biosynthesis; gluconeogenesis. Its pathway is carbohydrate degradation; glycolysis; D-glyceraldehyde 3-phosphate from glycerone phosphate: step 1/1. Its function is as follows. Involved in the gluconeogenesis. Catalyzes stereospecifically the conversion of dihydroxyacetone phosphate (DHAP) to D-glyceraldehyde-3-phosphate (G3P). This is Triosephosphate isomerase from Histophilus somni (strain 2336) (Haemophilus somnus).